The sequence spans 279 residues: Pantothenate synthetase (279 aa).

Residue 26–33 coordinates ATP; the sequence is MGNLHEGH. Histidine 33 acts as the Proton donor in catalysis. Glutamine 57 contributes to the (R)-pantoate binding site. A beta-alanine-binding site is contributed by glutamine 57. Position 144-147 (144-147) interacts with ATP; that stretch reads GKKD. A (R)-pantoate-binding site is contributed by glutamine 150. ATP-binding positions include valine 173 and 181-184; that span reads LSSR.

It belongs to the pantothenate synthetase family. As to quaternary structure, homodimer.

It localises to the cytoplasm. It carries out the reaction (R)-pantoate + beta-alanine + ATP = (R)-pantothenate + AMP + diphosphate + H(+). The protein operates within cofactor biosynthesis; (R)-pantothenate biosynthesis; (R)-pantothenate from (R)-pantoate and beta-alanine: step 1/1. Functionally, catalyzes the condensation of pantoate with beta-alanine in an ATP-dependent reaction via a pantoyl-adenylate intermediate. The sequence is that of Pantothenate synthetase from Burkholderia thailandensis (strain ATCC 700388 / DSM 13276 / CCUG 48851 / CIP 106301 / E264).